A 503-amino-acid chain; its full sequence is ATP synthase subunit alpha (503 aa).

169–176 (GDRQTGKT) contacts ATP.

It belongs to the ATPase alpha/beta chains family. As to quaternary structure, F-type ATPases have 2 components, CF(1) - the catalytic core - and CF(0) - the membrane proton channel. CF(1) has five subunits: alpha(3), beta(3), gamma(1), delta(1), epsilon(1). CF(0) has three main subunits: a(1), b(2) and c(9-12). The alpha and beta chains form an alternating ring which encloses part of the gamma chain. CF(1) is attached to CF(0) by a central stalk formed by the gamma and epsilon chains, while a peripheral stalk is formed by the delta and b chains.

Its subcellular location is the cell membrane. The catalysed reaction is ATP + H2O + 4 H(+)(in) = ADP + phosphate + 5 H(+)(out). Produces ATP from ADP in the presence of a proton gradient across the membrane. The alpha chain is a regulatory subunit. This Staphylococcus epidermidis (strain ATCC 35984 / DSM 28319 / BCRC 17069 / CCUG 31568 / BM 3577 / RP62A) protein is ATP synthase subunit alpha.